The sequence spans 66 residues: Large ribosomal subunit protein eL24 (66 aa).

Cys-7, Cys-10, Cys-33, and Cys-37 together coordinate Zn(2+). The C4-type zinc finger occupies 7 to 37 (CSYCGKPFEPGTGKMYVRNDGRVLFFCSRKC).

This sequence belongs to the eukaryotic ribosomal protein eL24 family. In terms of assembly, part of the 50S ribosomal subunit. Forms a cluster with proteins L3 and L14. The cofactor is Zn(2+).

Its function is as follows. Binds to the 23S rRNA. The chain is Large ribosomal subunit protein eL24 from Pyrococcus furiosus (strain ATCC 43587 / DSM 3638 / JCM 8422 / Vc1).